A 320-amino-acid chain; its full sequence is MRALALLLALPLLGARAQHGSLWTYSEGALDQVHWPREYPTCGGTRQSPIDLQRRKVQYNPSLKALKLTGYRIQVGEFPMINNGHTVQISLPPTMRMMASDGTEYIAQQMHFHWGGASSEISGSEHTIDGIRFVAEIHIVHYNSKYKSYDIAQHEPDGLAVLAALVKVEDYGENTYYSNFISHLNNIRYPGQSTVLSGLDIEDMLPENTHHYYTYRGSLTTPPCTENVHWFVLVHHVRLSSIQTWKLENSILDHQNKTLHSDYRRIQPLNGRVVESNFVNLPSQGSEFQFYVNKLNNKLEYLRRLLEKTKVEKKPHIHQA.

The signal sequence occupies residues 1–17 (MRALALLLALPLLGARA). An Alpha-carbonic anhydrase domain is found at 21 to 278 (SLWTYSEGAL…LNGRVVESNF (258 aa)). Cysteines 42 and 224 form a disulfide. The active-site Proton donor/acceptor is the His85. Residues His111, His113, and His138 each contribute to the Zn(2+) site. A substrate-binding site is contributed by 220 to 221 (TT). Asn256 carries an N-linked (GlcNAc...) asparagine glycan.

The protein belongs to the alpha-carbonic anhydrase family. Zn(2+) serves as cofactor.

Its subcellular location is the secreted. It carries out the reaction hydrogencarbonate + H(+) = CO2 + H2O. Functionally, reversible hydration of carbon dioxide. Its role in saliva is unknown. This chain is Carbonic anhydrase 6 (CA6), found in Canis lupus familiaris (Dog).